Consider the following 860-residue polypeptide: GPI ethanolamine phosphate transferase 2 (860 aa).

Asparagine 123 and asparagine 180 each carry an N-linked (GlcNAc...) asparagine glycan. 8 helical membrane passes run 408-428 (LGGI…FSAL), 438-458 (LYLI…TVEE), 459-479 (EHQI…ISGS), 487-506 (FNWM…NQTG), 524-544 (NHPV…NKVW), 555-575 (LAFL…ITQA), 576-596 (WEAG…PGTL), and 639-659 (AFLT…LFMV). Residue asparagine 672 is glycosylated (N-linked (GlcNAc...) asparagine). Transmembrane regions (helical) follow at residues 692-712 (LVLV…FSMG), 736-756 (FVGV…STAG), 795-815 (VYVV…TCFF), and 834-854 (FVWT…IFVV).

The protein belongs to the PIGG/PIGN/PIGO family. PIGG subfamily.

It localises to the endoplasmic reticulum membrane. It participates in glycolipid biosynthesis; glycosylphosphatidylinositol-anchor biosynthesis. Its function is as follows. Ethanolamine phosphate transferase involved in glycosylphosphatidylinositol-anchor biosynthesis. Transfers ethanolamine phosphate to the GPI second mannose. The sequence is that of GPI ethanolamine phosphate transferase 2 (LAS21) from Yarrowia lipolytica (strain CLIB 122 / E 150) (Yeast).